Here is a 727-residue protein sequence, read N- to C-terminus: Glucans biosynthesis glucosyltransferase H (727 aa).

The interval 18–38 (SAMPNERPGAMEPQNLSKMPE) is disordered. The next 7 membrane-spanning stretches (helical) occupy residues 58 to 78 (FLVV…MGAV), 97 to 117 (VNFC…LILL), 278 to 298 (LQQF…GWWV), 408 to 428 (IMAY…LMLA), 460 to 480 (LFYI…LLLL), 496 to 516 (IFSV…MMFI), and 572 to 592 (LLAW…ISAW).

The protein belongs to the glycosyltransferase 2 family. OpgH subfamily.

It localises to the cell inner membrane. The protein operates within glycan metabolism; osmoregulated periplasmic glucan (OPG) biosynthesis. In terms of biological role, involved in the biosynthesis of osmoregulated periplasmic glucans (OPGs). The sequence is that of Glucans biosynthesis glucosyltransferase H from Shewanella baltica (strain OS223).